Reading from the N-terminus, the 199-residue chain is NAD(P)H dehydrogenase (quinone) (199 aa).

Positions 4–190 (VLVLYYSAYG…AGARYQGRVI (187 aa)) constitute a Flavodoxin-like domain. FMN-binding positions include 10 to 15 (SAYGHI) and 78 to 80 (TRF). Tyr12 provides a ligand contact to NAD(+). Trp98 lines the substrate pocket. FMN contacts are provided by residues 113–119 (STATQHG) and His134.

It belongs to the WrbA family. The cofactor is FMN.

It catalyses the reaction a quinone + NADH + H(+) = a quinol + NAD(+). It carries out the reaction a quinone + NADPH + H(+) = a quinol + NADP(+). The polypeptide is NAD(P)H dehydrogenase (quinone) (Bradyrhizobium sp. (strain BTAi1 / ATCC BAA-1182)).